Consider the following 120-residue polypeptide: MERTSTSLLFLLSLLIIFASAVNQIRAQTCDENLSSCENCDQRCKAKHGPSSVSKCNGPDGTCGCASFKPAKLCIGATDMCTDKCPTSCCDRQCAIKYKNGKGGCVDYAGYRMCICEYTC.

Positions 1-27 (MERTSTSLLFLLSLLIIFASAVNQIRA) are cleaved as a signal peptide. 7 disulfide bridges follow: Cys37-Cys56, Cys40-Cys63, Cys44-Cys65, Cys74-Cys120, Cys85-Cys105, Cys90-Cys114, and Cys94-Cys116.

Belongs to the DEFL family.

It is found in the secreted. The sequence is that of Putative defensin-like protein 179 (LCR57) from Arabidopsis thaliana (Mouse-ear cress).